We begin with the raw amino-acid sequence, 116 residues long: Nascent polypeptide-associated complex protein (116 aa).

An NAC-A/B domain is found at 6–70; that stretch reads PKQMKDLERM…AREESKQQQK (65 aa).

The protein belongs to the NAC-alpha family. In terms of assembly, homodimer. Interacts with the ribosome. Binds ribosomal RNA.

Contacts the emerging nascent chain on the ribosome. This Sulfolobus acidocaldarius (strain ATCC 33909 / DSM 639 / JCM 8929 / NBRC 15157 / NCIMB 11770) protein is Nascent polypeptide-associated complex protein.